A 440-amino-acid polypeptide reads, in one-letter code: NADH-quinone oxidoreductase subunit D 2 (440 aa).

The protein belongs to the complex I 49 kDa subunit family. NDH-1 is composed of 14 different subunits. Subunits NuoB, C, D, E, F, and G constitute the peripheral sector of the complex.

The protein resides in the cell membrane. The enzyme catalyses a quinone + NADH + 5 H(+)(in) = a quinol + NAD(+) + 4 H(+)(out). NDH-1 shuttles electrons from NADH, via FMN and iron-sulfur (Fe-S) centers, to quinones in the respiratory chain. The immediate electron acceptor for the enzyme in this species is believed to be a menaquinone. Couples the redox reaction to proton translocation (for every two electrons transferred, four hydrogen ions are translocated across the cytoplasmic membrane), and thus conserves the redox energy in a proton gradient. The polypeptide is NADH-quinone oxidoreductase subunit D 2 (Streptomyces coelicolor (strain ATCC BAA-471 / A3(2) / M145)).